Reading from the N-terminus, the 190-residue chain is Elongation factor P (190 aa).

The protein belongs to the elongation factor P family.

It is found in the cytoplasm. It functions in the pathway protein biosynthesis; polypeptide chain elongation. Its function is as follows. Involved in peptide bond synthesis. Stimulates efficient translation and peptide-bond synthesis on native or reconstituted 70S ribosomes in vitro. Probably functions indirectly by altering the affinity of the ribosome for aminoacyl-tRNA, thus increasing their reactivity as acceptors for peptidyl transferase. This Pseudomonas fluorescens (strain ATCC BAA-477 / NRRL B-23932 / Pf-5) protein is Elongation factor P.